The sequence spans 1246 residues: Stromal processing peptidase, chloroplastic (1246 aa).

A chloroplast-targeting transit peptide spans Met1–His136. His228 is a binding site for Zn(2+). Glu231 serves as the catalytic Proton acceptor. A Zn(2+)-binding site is contributed by His232. Residue Glu302 is part of the active site. Position 309 (Glu309) interacts with Zn(2+).

The protein belongs to the peptidase M16 family. Zn(2+) serves as cofactor. As to expression, widely expressed.

It localises to the plastid. It is found in the chloroplast stroma. Its function is as follows. Cleaves presequences (transit peptides) from chloroplastic protein precursors. Initially recognizes a precursor by binding to the C-terminus of its transit peptide and then removes the transit peptide in a single endoproteolytic step. In a next step, pursues the cleavage of transit peptide to a subfragment form. This chain is Stromal processing peptidase, chloroplastic, found in Oryza sativa subsp. indica (Rice).